A 166-amino-acid chain; its full sequence is Ribosome maturation factor RimM (166 aa).

Positions 95–164 (EEEYYAYELV…KKIIVKEELL (70 aa)) constitute a PRC barrel domain.

It belongs to the RimM family. As to quaternary structure, binds ribosomal protein uS19.

It is found in the cytoplasm. In terms of biological role, an accessory protein needed during the final step in the assembly of 30S ribosomal subunit, possibly for assembly of the head region. Essential for efficient processing of 16S rRNA. May be needed both before and after RbfA during the maturation of 16S rRNA. It has affinity for free ribosomal 30S subunits but not for 70S ribosomes. This chain is Ribosome maturation factor RimM, found in Aquifex aeolicus (strain VF5).